Here is a 378-residue protein sequence, read N- to C-terminus: tRNA-specific 2-thiouridylase MnmA (378 aa).

Residues 6 to 13 (AMSGGVDS) and leucine 32 each bind ATP. The Nucleophile role is filled by cysteine 101. A disulfide bridge links cysteine 101 with cysteine 199. Residue glycine 125 participates in ATP binding. The interval 148–150 (KDQ) is interaction with tRNA. Cysteine 199 serves as the catalytic Cysteine persulfide intermediate.

This sequence belongs to the MnmA/TRMU family.

The protein resides in the cytoplasm. It catalyses the reaction S-sulfanyl-L-cysteinyl-[protein] + uridine(34) in tRNA + AH2 + ATP = 2-thiouridine(34) in tRNA + L-cysteinyl-[protein] + A + AMP + diphosphate + H(+). Its function is as follows. Catalyzes the 2-thiolation of uridine at the wobble position (U34) of tRNA, leading to the formation of s(2)U34. In Renibacterium salmoninarum (strain ATCC 33209 / DSM 20767 / JCM 11484 / NBRC 15589 / NCIMB 2235), this protein is tRNA-specific 2-thiouridylase MnmA.